Consider the following 248-residue polypeptide: 14-3-3 protein sigma (248 aa).

Phosphoserine occurs at positions 5, 74, and 248.

This sequence belongs to the 14-3-3 family. In terms of assembly, homodimer. Interacts with KRT17 and SAMSN1. Found in a complex with XPO7, EIF4A1, ARHGAP1, VPS26A, VPS29 and VPS35. Interacts with GAB2. Interacts with SRPK2. Interacts with COPS6. Interacts with COP1; this interaction leads to proteasomal degradation. Interacts with the 'Thr-369' phosphorylated form of DAPK2. Interacts with PI4KB. Interacts with SLITRK1. Interacts with LRRK2; this interaction is dependent on LRRK2 phosphorylation. Interacts with PKP3 (via N-terminus); the interaction maintains the cytoplasmic pool of PKP3, facilitates PKP3 exchange at desmosomes and restricts PKP3 localization to existing desmosome cell junctions. Interacts with LCP2. Post-translationally, ubiquitinated. Ubiquitination by RFFL induces proteasomal degradation and indirectly regulates p53/TP53 activation. Expressed in dorsal skin (at protein level). Expressed in the basal layer of skin epithelium and in outer root sheath of hair follicle.

It is found in the cytoplasm. Its subcellular location is the nucleus. It localises to the secreted. Its function is as follows. Adapter protein implicated in the regulation of a large spectrum of both general and specialized signaling pathways. Binds to a large number of partners, usually by recognition of a phosphoserine or phosphothreonine motif. Binding generally results in the modulation of the activity of the binding partner. Promotes cytosolic retention of GBP1 GTPase by binding to phosphorylated GBP1, thereby inhibiting the innate immune response. Also acts as a TP53/p53-regulated inhibitor of G2/M progression. When bound to KRT17, regulates protein synthesis and epithelial cell growth by stimulating Akt/mTOR pathway. Acts to maintain desmosome cell junction adhesion in epithelial cells via interacting with and sequestering PKP3 to the cytoplasm, thereby restricting its translocation to existing desmosome structures and therefore maintaining desmosome protein homeostasis. Also acts to facilitate PKP3 exchange at desmosome plaques, thereby maintaining keratinocyte intercellular adhesion. May also regulate MDM2 autoubiquitination and degradation and thereby activate p53/TP53. The polypeptide is 14-3-3 protein sigma (Sfn) (Mus musculus (Mouse)).